The following is a 182-amino-acid chain: Plasmolipin (182 aa).

The Cytoplasmic segment spans residues 1–35 (MAEFPSKVSTRTSSPAQGVGASVSALRPDLGFVRS). Ser-9 carries the phosphoserine modification. One can recognise an MARVEL domain in the interval 32-166 (FVRSALGVLA…SAFFSFQAWR (135 aa)). Residues 36–56 (ALGVLALLQLALGLLVWALIA) traverse the membrane as a helical segment. The Extracellular segment spans residues 57–68 (DTPYHLYPAYGW). The helical transmembrane segment at 69–89 (VMFVAVFLWLVTIVFFIIYLF) threads the bilayer. At 90 to 99 (QLHMKLYMVP) the chain is on the cytoplasmic side. Residues 100–120 (WPLVLLIFFVAATVLYITAFI) traverse the membrane as a helical segment. Residues 121 to 141 (ACAAAVDLTSLRGSRPYNQRS) are Extracellular-facing. The helical transmembrane segment at 142–162 (AASFFACLVMIAYGVSAFFSF) threads the bilayer. Residues 163–182 (QAWRGVGSNAATSQMAGGYS) are Cytoplasmic-facing.

The protein belongs to the MAL family. As to quaternary structure, forms oligomers. Phosphorylated.

The protein localises to the membrane. Its subcellular location is the cell membrane. It localises to the myelin membrane. It is found in the apical cell membrane. Its function is as follows. Main component of the myelin sheath that plays an important role in myelin membrane biogenesis and myelination. Plays an essential function in apical endocytosis. Regulates epithelial development through the regulation of apical endocytosis. Part of the intracellular machinery that mediates basolateral-to-apical transport of ICAM-1, an essential adhesion receptor in epithelial cells, from the subapical compartment in hepatic epithelial cells. The protein is Plasmolipin (Pllp) of Mus musculus (Mouse).